A 135-amino-acid polypeptide reads, in one-letter code: MPRNEKKTGQSASPRKLRVGELVRHAVAEILSQGGVHDPVLETHLITVPEVRMSPDLKLATVYVMPLGGKDEKPVLAALEQHKRFLRGEVARRVNLKYAPDLRFRIDERFAEAERIEKLLRTPAVQKDLSGEEET.

It belongs to the RbfA family. As to quaternary structure, monomer. Binds 30S ribosomal subunits, but not 50S ribosomal subunits or 70S ribosomes.

It localises to the cytoplasm. One of several proteins that assist in the late maturation steps of the functional core of the 30S ribosomal subunit. Associates with free 30S ribosomal subunits (but not with 30S subunits that are part of 70S ribosomes or polysomes). Required for efficient processing of 16S rRNA. May interact with the 5'-terminal helix region of 16S rRNA. In Rhodopseudomonas palustris (strain HaA2), this protein is Ribosome-binding factor A.